Consider the following 343-residue polypeptide: Uroporphyrinogen decarboxylase (343 aa).

Residues 23 to 27 (RQAGR), F42, D73, Y150, S205, and H322 each bind substrate.

It belongs to the uroporphyrinogen decarboxylase family. As to quaternary structure, homodimer.

The protein resides in the cytoplasm. It catalyses the reaction uroporphyrinogen III + 4 H(+) = coproporphyrinogen III + 4 CO2. The protein operates within porphyrin-containing compound metabolism; protoporphyrin-IX biosynthesis; coproporphyrinogen-III from 5-aminolevulinate: step 4/4. With respect to regulation, inhibited by N-ethyl-maleimide and phenylglyoxal. Its function is as follows. Catalyzes the decarboxylation of four acetate groups of uroporphyrinogen-III to yield coproporphyrinogen-III. The sequence is that of Uroporphyrinogen decarboxylase (hemE) from Cereibacter sphaeroides (strain ATCC 17023 / DSM 158 / JCM 6121 / CCUG 31486 / LMG 2827 / NBRC 12203 / NCIMB 8253 / ATH 2.4.1.) (Rhodobacter sphaeroides).